Consider the following 445-residue polypeptide: MAVQIENLGSVDRKTTLEFARADLAKLREARLAKVGKTMKVAGFRPGKVPKSMVEKQYGMQVDFELQFDKASDLFYELCQKEGIPLAGQPRLEPKSELEAETIAFDVFFEVLPEVKMGDFSAAEVTKYTTEIGEAEIDRAIDVLRKQQVHYHARGEAGAHGDGGANTAAQNGDQVVIDFVGKLDGVEFAGGKAENFEFVLGEGRMLPEFEAAALGLKVGESKSFPLTFPADYHGKDVAGKTAEFTITVKSVNWAHMPVVDDAFALSLGVAEGGVAKMREEVKENLDREVKRRITSLLKSEVMDKLNALCELDVPKSLVTSEQERLVQSARQDLMQRGVPNAKDAPIPAEIFAEQATKRVRLGLILGELVKKQNLAATTDQIKAEIEEQAATYEDPKEVVRWYYSNPSRLKDIENLVLEDNVIKHFTSLAKVVDKAITFEELSKLN.

One can recognise a PPIase FKBP-type domain in the interval 172 to 257; sequence GDQVVIDFVG…VKSVNWAHMP (86 aa).

The protein belongs to the FKBP-type PPIase family. Tig subfamily.

The protein localises to the cytoplasm. It catalyses the reaction [protein]-peptidylproline (omega=180) = [protein]-peptidylproline (omega=0). Functionally, involved in protein export. Acts as a chaperone by maintaining the newly synthesized protein in an open conformation. Functions as a peptidyl-prolyl cis-trans isomerase. The protein is Trigger factor of Polynucleobacter asymbioticus (strain DSM 18221 / CIP 109841 / QLW-P1DMWA-1) (Polynucleobacter necessarius subsp. asymbioticus).